The following is a 286-amino-acid chain: Quinone oxidoreductase 2 (286 aa).

NADP(+) is bound by residues 6-11, R33, 73-75, 138-143, and R171; these read GATGQL, SSS, and GWYSEN.

It belongs to the NmrA-type oxidoreductase family. As to quaternary structure, monomer.

It carries out the reaction a quinone + NADH + H(+) = a quinol + NAD(+). The catalysed reaction is a quinone + NADPH + H(+) = a quinol + NADP(+). Quinone oxidoreductase that may play some additional role beyond quinone reduction. Potential redox sensor protein. Overexpression induces retardation of growth. The chain is Quinone oxidoreductase 2 (qorB) from Escherichia coli (strain K12).